A 154-amino-acid chain; its full sequence is Interleukin-2 (154 aa).

A signal peptide spans 1–20 (MYRMQLLSCIALSLALVTNS). Threonine 23 carries an O-linked (GalNAc...) threonine glycan. Cysteine 78 and cysteine 126 form a disulfide bridge.

This sequence belongs to the IL-2 family.

The protein resides in the secreted. Functionally, cytokine produced by activated CD4-positive helper T-cells and to a lesser extend activated CD8-positive T-cells and natural killer (NK) cells that plays pivotal roles in the immune response and tolerance. Binds to a receptor complex composed of either the high-affinity trimeric IL-2R (IL2RA/CD25, IL2RB/CD122 and IL2RG/CD132) or the low-affinity dimeric IL-2R (IL2RB and IL2RG). Interaction with the receptor leads to oligomerization and conformation changes in the IL-2R subunits resulting in downstream signaling starting with phosphorylation of JAK1 and JAK3. In turn, JAK1 and JAK3 phosphorylate the receptor to form a docking site leading to the phosphorylation of several substrates including STAT5. This process leads to activation of several pathways including STAT, phosphoinositide-3-kinase/PI3K and mitogen-activated protein kinase/MAPK pathways. Functions as a T-cell growth factor and can increase NK-cell cytolytic activity as well. Promotes strong proliferation of activated B-cells and subsequently immunoglobulin production. Plays a pivotal role in regulating the adaptive immune system by controlling the survival and proliferation of regulatory T-cells, which are required for the maintenance of immune tolerance. Moreover, participates in the differentiation and homeostasis of effector T-cell subsets, including Th1, Th2, Th17 as well as memory CD8-positive T-cells. The chain is Interleukin-2 (IL2) from Cercocebus atys (Sooty mangabey).